Here is a 488-residue protein sequence, read N- to C-terminus: Proline--tRNA ligase (488 aa).

This sequence belongs to the class-II aminoacyl-tRNA synthetase family. ProS type 3 subfamily. Homodimer.

The protein resides in the cytoplasm. The catalysed reaction is tRNA(Pro) + L-proline + ATP = L-prolyl-tRNA(Pro) + AMP + diphosphate. Catalyzes the attachment of proline to tRNA(Pro) in a two-step reaction: proline is first activated by ATP to form Pro-AMP and then transferred to the acceptor end of tRNA(Pro). This chain is Proline--tRNA ligase, found in Borreliella burgdorferi (strain ZS7) (Borrelia burgdorferi).